The chain runs to 466 residues: Neuraminidase (466 aa).

The Intravirion segment spans residues 1–8 (MLPSTVQT). Residues 9–31 (LTLLLTSGGVLLSLYVSASLSYL) traverse the membrane as a helical segment. Residues 13–35 (LTSGGVLLSLYVSASLSYLLYSD) form an involved in apical transport and lipid raft association region. Residues 32–466 (LYSDVLLKFS…DTVTGVDMAL (435 aa)) are Virion surface-facing. A hypervariable stalk region region spans residues 38–86 (LKFSSTKTTAPTMSLECTNASNAQTVNHSATKEMTFPPPEPEWTYPRLS). Residues Asn56 and Asn64 are each glycosylated (N-linked (GlcNAc...) asparagine; by host). Disulfide bonds link Cys87–Cys420, Cys122–Cys127, Cys182–Cys229, Cys231–Cys236, Cys277–Cys291, Cys279–Cys289, Cys318–Cys337, and Cys424–Cys447. The head of neuraminidase stretch occupies residues 89–466 (GSTFQKALLI…DTVTGVDMAL (378 aa)). Arg116 contacts substrate. Asn144 carries an N-linked (GlcNAc...) asparagine; by host glycan. Asp149 functions as the Proton donor/acceptor in the catalytic mechanism. Arg150 contributes to the substrate binding site. 275 to 276 (EE) is a substrate binding site. A glycan (N-linked (GlcNAc...) asparagine; by host) is linked at Asn284. Residue Arg292 participates in substrate binding. Asp293, Thr297, Asp324, and Gly346 together coordinate Ca(2+). Arg374 contacts substrate. Tyr409 acts as the Nucleophile in catalysis.

It belongs to the glycosyl hydrolase 34 family. As to quaternary structure, homotetramer. Ca(2+) serves as cofactor. Post-translationally, N-glycosylated.

The protein resides in the virion membrane. It is found in the host apical cell membrane. It carries out the reaction Hydrolysis of alpha-(2-&gt;3)-, alpha-(2-&gt;6)-, alpha-(2-&gt;8)- glycosidic linkages of terminal sialic acid residues in oligosaccharides, glycoproteins, glycolipids, colominic acid and synthetic substrates.. With respect to regulation, inhibited by the neuraminidase inhibitors zanamivir (Relenza) and oseltamivir (Tamiflu). These drugs interfere with the release of progeny virus from infected cells and are effective against all influenza strains. Resistance to neuraminidase inhibitors is quite rare. Catalyzes the removal of terminal sialic acid residues from viral and cellular glycoconjugates. Cleaves off the terminal sialic acids on the glycosylated HA during virus budding to facilitate virus release. Additionally helps virus spread through the circulation by further removing sialic acids from the cell surface. These cleavages prevent self-aggregation and ensure the efficient spread of the progeny virus from cell to cell. Otherwise, infection would be limited to one round of replication. Described as a receptor-destroying enzyme because it cleaves a terminal sialic acid from the cellular receptors. May facilitate viral invasion of the upper airways by cleaving the sialic acid moieties on the mucin of the airway epithelial cells. Likely to plays a role in the budding process through its association with lipid rafts during intracellular transport. May additionally display a raft-association independent effect on budding. Plays a role in the determination of host range restriction on replication and virulence. Sialidase activity in late endosome/lysosome traffic seems to enhance virus replication. The chain is Neuraminidase from Influenza B virus (strain B/Lee/1940).